Here is a 156-residue protein sequence, read N- to C-terminus: Small ribosomal subunit protein uS7c (156 aa).

This sequence belongs to the universal ribosomal protein uS7 family. In terms of assembly, part of the 30S ribosomal subunit.

It localises to the plastid. One of the primary rRNA binding proteins, it binds directly to 16S rRNA where it nucleates assembly of the head domain of the 30S subunit. In Prototheca wickerhamii, this protein is Small ribosomal subunit protein uS7c (rps7).